Reading from the N-terminus, the 227-residue chain is MSDPFGSPFPSLHDQNLNAQHAMASDHRLANAASYQSYQRQRQMTLGDLLLENRIVFMQGEIHYANANEIVMKLLYLQSENRRKDIHLYINSPGGSVTATLAIYDTMQMLSCPVATYCVGEACSGAAVLLIGGAKGKRFCLPNSRVMMHQPLGGVSGQVSDIEIQAAEMFRYRDKLNEIISSHCGKSVEQIAKDTDRDFFLDAQQAKEYGLVDDLLLGTPASEEDED.

Catalysis depends on Ser124, which acts as the Nucleophile. Residue His149 is part of the active site.

The protein belongs to the peptidase S14 family. Fourteen ClpP subunits assemble into 2 heptameric rings which stack back to back to give a disk-like structure with a central cavity, resembling the structure of eukaryotic proteasomes.

It localises to the cytoplasm. It catalyses the reaction Hydrolysis of proteins to small peptides in the presence of ATP and magnesium. alpha-casein is the usual test substrate. In the absence of ATP, only oligopeptides shorter than five residues are hydrolyzed (such as succinyl-Leu-Tyr-|-NHMec, and Leu-Tyr-Leu-|-Tyr-Trp, in which cleavage of the -Tyr-|-Leu- and -Tyr-|-Trp bonds also occurs).. Cleaves peptides in various proteins in a process that requires ATP hydrolysis. Has a chymotrypsin-like activity. Plays a major role in the degradation of misfolded proteins. In Rhodopirellula baltica (strain DSM 10527 / NCIMB 13988 / SH1), this protein is ATP-dependent Clp protease proteolytic subunit 1.